The following is a 95-amino-acid chain: Small ribosomal subunit protein bS20 (95 aa).

The tract at residues 1–22 is disordered; that stretch reads MANIKSQIKRNRTNENNRLRNK. Over residues 12–22 the composition is skewed to basic and acidic residues; sequence RTNENNRLRNK.

It belongs to the bacterial ribosomal protein bS20 family.

Binds directly to 16S ribosomal RNA. This is Small ribosomal subunit protein bS20 from Tropheryma whipplei (strain TW08/27) (Whipple's bacillus).